A 685-amino-acid polypeptide reads, in one-letter code: Methionine--tRNA ligase (685 aa).

Positions 12-22 match the 'HIGH' region motif; the sequence is PYANGSIHLGH. Residues Cys-143, Cys-146, Cys-156, and Cys-159 each contribute to the Zn(2+) site. Positions 339–343 match the 'KMSKS' region motif; that stretch reads KMSKS. An ATP-binding site is contributed by Lys-342. Residues 582–685 form the tRNA-binding domain; sequence DFMKIDMRVA…TGAQPGDKVG (104 aa).

The protein belongs to the class-I aminoacyl-tRNA synthetase family. MetG type 1 subfamily. As to quaternary structure, homodimer. The cofactor is Zn(2+).

It localises to the cytoplasm. It carries out the reaction tRNA(Met) + L-methionine + ATP = L-methionyl-tRNA(Met) + AMP + diphosphate. In terms of biological role, is required not only for elongation of protein synthesis but also for the initiation of all mRNA translation through initiator tRNA(fMet) aminoacylation. The polypeptide is Methionine--tRNA ligase (Neisseria meningitidis serogroup B (strain ATCC BAA-335 / MC58)).